We begin with the raw amino-acid sequence, 511 residues long: Lysine--tRNA ligase (511 aa).

2 residues coordinate Mg(2+): Glu421 and Glu428.

This sequence belongs to the class-II aminoacyl-tRNA synthetase family. Homodimer. The cofactor is Mg(2+).

Its subcellular location is the cytoplasm. The catalysed reaction is tRNA(Lys) + L-lysine + ATP = L-lysyl-tRNA(Lys) + AMP + diphosphate. The sequence is that of Lysine--tRNA ligase from Janthinobacterium sp. (strain Marseille) (Minibacterium massiliensis).